The sequence spans 769 residues: Serine protease HtrA-like (769 aa).

Basic residues predominate over residues 1–20; that stretch reads MDIGKKHVIPKSQYRRKRRE. The interval 1–390 is disordered; sequence MDIGKKHVIP…ATSKLNKGRA (390 aa). 2 stretches are compositionally biased toward basic and acidic residues: residues 21 to 64 and 71 to 108; these read FFHN…ERFK and LEQR…DVSK. The segment covering 126–137 has biased composition (polar residues); the sequence is YEQNSEATLSTK. Residues 138–186 show a composition bias toward basic and acidic residues; sequence STDKVESSDMRKLSPDKNKVGHEEQHVLSKPSEHDKETRIDFESSRTDS. 2 stretches are compositionally biased toward polar residues: residues 202-221 and 247-262; these read GNES…NTVP and QQSQ…YGDS. Over residues 264-295 the composition is skewed to basic and acidic residues; it reads QNDKSNHENDLSHHTPSKSDDKDNVMREDHIV. The segment covering 298–308 has biased composition (polar residues); the sequence is NPDNDINTPSL. Positions 310–330 are enriched in basic and acidic residues; that stretch reads KIDDDRKLDEKIHVEDKHKQN. Polar residues predominate over residues 331–347; sequence ADSSETVGYQSQSSVSH. Basic and acidic residues predominate over residues 348-362; the sequence is RSTEKRNMAINDHHK. Positions 366 to 390 are enriched in polar residues; the sequence is QKLNTKTSANNNQKKATSKLNKGRA. The helical transmembrane segment at 410–430 threads the bilayer; it reads LVILMGIIILIVILNAIFNNV. Active-site charge relay system residues include H504, D534, and S619. One can recognise a PDZ domain in the interval 680 to 733; that stretch reads IASLNSFERQAVKLPGKVKNGVVVDQVDNNGLADQSSLKKGDVITELDGKLLED.

This sequence belongs to the peptidase S1C family.

The protein localises to the cell membrane. This chain is Serine protease HtrA-like, found in Staphylococcus aureus (strain bovine RF122 / ET3-1).